The chain runs to 119 residues: NADH-quinone oxidoreductase subunit A (119 aa).

Helical transmembrane passes span Tyr7–Gly27, Leu63–Val83, and Ile88–Ala108.

This sequence belongs to the complex I subunit 3 family. In terms of assembly, NDH-1 is composed of 14 different subunits. Subunits NuoA, H, J, K, L, M, N constitute the membrane sector of the complex.

The protein localises to the cell inner membrane. It carries out the reaction a quinone + NADH + 5 H(+)(in) = a quinol + NAD(+) + 4 H(+)(out). Its function is as follows. NDH-1 shuttles electrons from NADH, via FMN and iron-sulfur (Fe-S) centers, to quinones in the respiratory chain. The immediate electron acceptor for the enzyme in this species is believed to be ubiquinone. Couples the redox reaction to proton translocation (for every two electrons transferred, four hydrogen ions are translocated across the cytoplasmic membrane), and thus conserves the redox energy in a proton gradient. The sequence is that of NADH-quinone oxidoreductase subunit A from Burkholderia ambifaria (strain MC40-6).